A 600-amino-acid chain; its full sequence is Elongation factor 4 (600 aa).

The region spanning 5–187 is the tr-type G domain; sequence SHIRNFSIVA…ALVNRLPCPE (183 aa). GTP contacts are provided by residues 17 to 22 and 134 to 137; these read DHGKST and NKID.

Belongs to the TRAFAC class translation factor GTPase superfamily. Classic translation factor GTPase family. LepA subfamily.

The protein resides in the cell inner membrane. It carries out the reaction GTP + H2O = GDP + phosphate + H(+). Required for accurate and efficient protein synthesis under certain stress conditions. May act as a fidelity factor of the translation reaction, by catalyzing a one-codon backward translocation of tRNAs on improperly translocated ribosomes. Back-translocation proceeds from a post-translocation (POST) complex to a pre-translocation (PRE) complex, thus giving elongation factor G a second chance to translocate the tRNAs correctly. Binds to ribosomes in a GTP-dependent manner. This chain is Elongation factor 4, found in Paramagnetospirillum magneticum (strain ATCC 700264 / AMB-1) (Magnetospirillum magneticum).